A 203-amino-acid polypeptide reads, in one-letter code: ATP-dependent Clp protease proteolytic subunit (203 aa).

Catalysis depends on Ser-100, which acts as the Nucleophile. Residue His-125 is part of the active site.

It belongs to the peptidase S14 family. Component of the chloroplastic Clp protease core complex.

It localises to the plastid. It is found in the chloroplast stroma. It catalyses the reaction Hydrolysis of proteins to small peptides in the presence of ATP and magnesium. alpha-casein is the usual test substrate. In the absence of ATP, only oligopeptides shorter than five residues are hydrolyzed (such as succinyl-Leu-Tyr-|-NHMec, and Leu-Tyr-Leu-|-Tyr-Trp, in which cleavage of the -Tyr-|-Leu- and -Tyr-|-Trp bonds also occurs).. Its function is as follows. Cleaves peptides in various proteins in a process that requires ATP hydrolysis. Has a chymotrypsin-like activity. Plays a major role in the degradation of misfolded proteins. This Dioscorea elephantipes (Elephant's foot yam) protein is ATP-dependent Clp protease proteolytic subunit.